The chain runs to 417 residues: Phosphoglycerate kinase (417 aa).

Val23, Asp24, Phe25, Asn26, Gln38, Arg39, Ser62, His63, Gly65, Arg66, Leu121, Arg122, His169, and Arg170 together coordinate (2R)-3-phosphoglycerate. Gly213 is an ADP binding site. Gly213 provides a ligand contact to CDP. The AMP site is built by Ala214 and Lys215. Ala214 contacts ATP. Ala214 is a binding site for Mg(2+). Asp218 contacts CDP. Mg(2+) is bound at residue Asp218. Lys219 provides a ligand contact to AMP. Lys219 is an ATP binding site. Position 237 (Gly237) interacts with ADP. Position 237 (Gly237) interacts with CDP. 2 residues coordinate AMP: Gly238 and Gly312. Residues Gly238 and Gly312 each contribute to the ATP site. CDP-binding residues include Gly337 and Phe342. Phe342 provides a ligand contact to ADP. Residue Glu343 coordinates AMP. Residues Glu343, Asp374, and Thr375 each contribute to the ATP site. Asp374 lines the Mg(2+) pocket.

The protein belongs to the phosphoglycerate kinase family. As to quaternary structure, monomer. Requires Mg(2+) as cofactor.

Its subcellular location is the cytoplasm. The protein resides in the mitochondrion. The catalysed reaction is (2R)-3-phosphoglycerate + ATP = (2R)-3-phospho-glyceroyl phosphate + ADP. It participates in carbohydrate degradation; glycolysis; pyruvate from D-glyceraldehyde 3-phosphate: step 2/5. Its function is as follows. Catalyzes one of the two ATP producing reactions in the glycolytic pathway via the reversible conversion of 1,3-diphosphoglycerate to 3-phosphoglycerate. Both L- and D- forms of purine and pyrimidine nucleotides can be used as substrates, but the activity is much lower on pyrimidines. Negatively regulates the biosynthesis of acetyl-CoA from pyruvate in the mitochondrion. This is Phosphoglycerate kinase (PGK1) from Candida maltosa (Yeast).